Consider the following 412-residue polypeptide: Tryptophan 2,3-dioxygenase (412 aa).

Residues 79 to 83, Tyr-146, and Arg-150 contribute to the substrate site; that span reads FIVVH. His-346 provides a ligand contact to heme. Thr-360 contacts substrate.

This sequence belongs to the tryptophan 2,3-dioxygenase family. As to quaternary structure, homotetramer. Requires heme as cofactor.

It catalyses the reaction L-tryptophan + O2 = N-formyl-L-kynurenine. It functions in the pathway amino-acid degradation; L-tryptophan degradation via kynurenine pathway; L-kynurenine from L-tryptophan: step 1/2. Its function is as follows. Heme-dependent dioxygenase that catalyzes the oxidative cleavage of the L-tryptophan (L-Trp) pyrrole ring and converts L-tryptophan to N-formyl-L-kynurenine. Catalyzes the oxidative cleavage of the indole moiety. The protein is Tryptophan 2,3-dioxygenase of Sorangium cellulosum (strain So ce56) (Polyangium cellulosum (strain So ce56)).